We begin with the raw amino-acid sequence, 543 residues long: Excitatory amino acid transporter 1 (543 aa).

The Cytoplasmic segment spans residues 1 to 47; the sequence is MTKSNGEDPRAGSRMERFQQGVRQRTLLAKKKVQNITKDDVKGFLKR. Residues 48–68 form a helical membrane-spanning segment; sequence NGFVLFTVIAVVVGSILGFSV. Topologically, residues 69–86 are extracellular; sequence RSYHMTFRELKYFSFPGE. A helical membrane pass occupies residues 87 to 108; that stretch reads LLMRMLQMLVLPLIVSSLVTGM. Residues 109–122 are Cytoplasmic-facing; that stretch reads AALDSKASGKMGLR. A helical membrane pass occupies residues 123–145; that stretch reads AVVYYMTTTVIAVFIGIVIVIIV. Residues 146 to 237 lie on the Extracellular side of the membrane; sequence HPGKGTKEHM…MREEMIPVPG (92 aa). N-linked (GlcNAc...) asparagine glycans are attached at residues N206 and N217. A helical membrane pass occupies residues 238–261; it reads AVNGVNALGLVVFSMCFGLVIGNM. The Cytoplasmic segment spans residues 262-270; it reads KEQGKALKD. A helical transmembrane segment spans residues 271–298; the sequence is FFDSLNEAIMRLVAVIMWYAPIGILFLI. Residues 299–319 lie on the Extracellular side of the membrane; that stretch reads AGKIAEMEDMGVVGGQLGMYT. Residues 320 to 341 traverse the membrane as a helical segment; the sequence is VTVIIGLLIHAVIVLPLLYFAV. Residues 342–346 are Cytoplasmic-facing; the sequence is TRKNP. Positions 347 to 377 form an intramembrane region, discontinuously helical; that stretch reads WVFIGGILQALITALGTSSSSATLPITFKCL. 364 to 366 is a binding site for L-aspartate; it reads SSS. The Cytoplasmic portion of the chain corresponds to 378–386; the sequence is EENNKVDKR. Residues 387–413 form a helical membrane-spanning segment; the sequence is VTRFVLPVGATINMDGTALYEALAAIF. 3 residues coordinate Na(+): G395, T397, and N399. T403 is a binding site for L-aspartate. Residues 414-426 are Extracellular-facing; it reads IAQVNNYDLNFGQ. Positions 427–460 form an intramembrane region, discontinuously helical; it reads ILTISITATAASIGAAGIPQAGLVTMVIVLTSVG. Position 444 to 448 (444 to 448) interacts with L-aspartate; that stretch reads IPQAG. Over 461-473 the chain is Extracellular; that stretch reads LPTDDITLIIAVD. The chain crosses the membrane as a helical span at residues 474-495; it reads WFLDRLRTTTNVLGDSLGAGIV. L-aspartate-binding residues include D477 and N484. Residues N484 and D488 each contribute to the Na(+) site. The Cytoplasmic portion of the chain corresponds to 496-543; it reads EHLSRHELQSGDAEMGNSVIEENEMKKPYQLVSQENELEKPIDSETKM. The interval 521–543 is disordered; sequence KKPYQLVSQENELEKPIDSETKM. Positions 532 to 543 are enriched in basic and acidic residues; that stretch reads ELEKPIDSETKM.

It belongs to the dicarboxylate/amino acid:cation symporter (DAACS) (TC 2.A.23) family. In terms of assembly, homotrimer. In terms of tissue distribution, detected in retina (at protein level).

It is found in the cell membrane. It catalyses the reaction K(+)(in) + L-glutamate(out) + 3 Na(+)(out) + H(+)(out) = K(+)(out) + L-glutamate(in) + 3 Na(+)(in) + H(+)(in). The enzyme catalyses K(+)(in) + L-aspartate(out) + 3 Na(+)(out) + H(+)(out) = K(+)(out) + L-aspartate(in) + 3 Na(+)(in) + H(+)(in). It carries out the reaction D-aspartate(out) + K(+)(in) + 3 Na(+)(out) + H(+)(out) = D-aspartate(in) + K(+)(out) + 3 Na(+)(in) + H(+)(in). In terms of biological role, sodium-dependent, high-affinity amino acid transporter that mediates the uptake of L-glutamate and also L-aspartate and D-aspartate. Functions as a symporter that transports one amino acid molecule together with two or three Na(+) ions and one proton, in parallel with the counter-transport of one K(+) ion. Plays a redundant role in the rapid removal of released glutamate from the synaptic cleft, which is essential for terminating the postsynaptic action of glutamate. This Ambystoma tigrinum (Eastern tiger salamander) protein is Excitatory amino acid transporter 1 (SLC1A3).